The chain runs to 166 residues: Bacterial non-heme ferritin (166 aa).

Positions 2–145 (LSKDLLEALN…THIDYLNRIG (144 aa)) constitute a Ferritin-like diiron domain. The Fe cation site is built by E17, E50, H53, E94, and Q127.

Belongs to the ferritin family. Prokaryotic subfamily.

It is found in the cytoplasm. It catalyses the reaction 4 Fe(2+) + O2 + 6 H2O = 4 iron(III) oxide-hydroxide + 12 H(+). In terms of biological role, iron-storage protein. The sequence is that of Bacterial non-heme ferritin (ftnA) from Staphylococcus haemolyticus (strain JCSC1435).